The chain runs to 179 residues: MLGVQRGECEDRPERAEPLSDAEMEIIQHTWGHVYKNCEDVGVSVLIRFFVNFPSAKQYFSQFQDMQDPEEMEKSSQLRQHARRVMNAINTVVENLQDPEKVSSVLALVGKAHAVKHKVEPIYFKIXSGVMLSVLSEDFPEFFTAEVQLVWTKLMAAVYWHVTGAYTEVGWLQVSSSAV.

A Globin domain is found at 18-167; sequence PLSDAEMEII…VYWHVTGAYT (150 aa). The heme b site is built by His81 and His113.

It belongs to the globin family. As to quaternary structure, monomeric.

It localises to the cytoplasm. The protein localises to the nucleus. It catalyses the reaction Fe(II)-heme b-[protein] + nitric oxide + O2 = Fe(III)-heme b-[protein] + nitrate. The catalysed reaction is Fe(III)-heme b-[protein] + nitric oxide + H2O = Fe(II)-heme b-[protein] + nitrite + 2 H(+). It carries out the reaction 2 superoxide + 2 H(+) = H2O2 + O2. The enzyme catalyses H2O2 + AH2 = A + 2 H2O. Probable multifunctional globin with a hexacoordinated heme iron required for the catalysis of various reactions depending on redox condition of the cell as well as oxygen availability. Has a nitric oxide dioxygenase (NOD) activity and is most probably involved in cell-mediated and oxygen-dependent nitric oxide consumption. Under normoxic conditions functions as a nitric oxide dioxygenase (NOD) but under hypoxic conditions the globin may switch its function to that of a nitrite (NO2) reductase (NiR), generating nitric oxide. Could also have peroxidase and superoxide dismutase activities, detoxifying reactive oxygen species and protecting cells against oxidative stress. Also binds dioxygen with low affinity and could function as an oxygen sensor but has probably no function as a respiratory oxygen carrier. The polypeptide is Cytoglobin-2 (Oryzias latipes (Japanese rice fish)).